The primary structure comprises 427 residues: MSQIRAIVGTQWGDEGKGKIVDFLAKEADVVVRAQGGSNAGHTVEAFGKIFKLHLIPSGILYKDKINIIGNGVVIDPESLIEEIESLQKEGISTENLRISDRAHLVMPYHKILDEEQEKQRGEESLGTTKRGIGPAYTDKTERTNLRVCDMLDEDEFVHKLRIVYERKNRILTEVYHKTPMKFGELLEQFMKYGEILRPYITDTIKLLNDAIKEGKKILLEGAQATMLDLDYGTYPYVTSSHPTVGGFCIGAGIAPKHIQEVIGVVKSYTTRVGKGPFPTELLDRVGDSIRERGKEYGTTTGRPRRCGWLDLVVVRYAVLINGIDKIALTKLDTLSNLPKVKVCVGYRHAGKILDLFPASLKVAMECEPIYEEFDGWSEEEIKKAKEYDQLPKNAKKYIEFIEKETGAKVFLIGTGASREDIIIKEN.

Residues glycine 13 to lysine 19 and glycine 41 to threonine 43 contribute to the GTP site. Aspartate 14 acts as the Proton acceptor in catalysis. The Mg(2+) site is built by aspartate 14 and glycine 41. IMP is bound by residues aspartate 14–lysine 17, asparagine 39–histidine 42, threonine 129, arginine 143, glutamine 224, threonine 239, and arginine 303. Catalysis depends on histidine 42, which acts as the Proton donor. A disordered region spans residues glutamine 117–tyrosine 137. Threonine 299 to arginine 305 is a binding site for substrate. GTP contacts are provided by residues arginine 305, lysine 331–aspartate 333, and glycine 414–glycine 416.

Belongs to the adenylosuccinate synthetase family. As to quaternary structure, homodimer. Requires Mg(2+) as cofactor.

It localises to the cytoplasm. The catalysed reaction is IMP + L-aspartate + GTP = N(6)-(1,2-dicarboxyethyl)-AMP + GDP + phosphate + 2 H(+). Its pathway is purine metabolism; AMP biosynthesis via de novo pathway; AMP from IMP: step 1/2. Functionally, plays an important role in the de novo pathway of purine nucleotide biosynthesis. Catalyzes the first committed step in the biosynthesis of AMP from IMP. This is Adenylosuccinate synthetase from Caldicellulosiruptor saccharolyticus (strain ATCC 43494 / DSM 8903 / Tp8T 6331).